A 269-amino-acid chain; its full sequence is Phosphate import ATP-binding protein PstB (269 aa).

The region spanning 21 to 264 is the ABC transporter domain; sequence IEIKDFNFFY…PKDRRTENYI (244 aa). Residue 55–62 participates in ATP binding; it reads GPSGCGKT.

It belongs to the ABC transporter superfamily. Phosphate importer (TC 3.A.1.7) family. The complex is composed of two ATP-binding proteins (PstB), two transmembrane proteins (PstC and PstA) and a solute-binding protein (PstS).

It localises to the cell membrane. The catalysed reaction is phosphate(out) + ATP + H2O = ADP + 2 phosphate(in) + H(+). Functionally, part of the ABC transporter complex PstSACB involved in phosphate import. Responsible for energy coupling to the transport system. This chain is Phosphate import ATP-binding protein PstB, found in Mycoplasma capricolum subsp. capricolum (strain California kid / ATCC 27343 / NCTC 10154).